A 538-amino-acid chain; its full sequence is Sucrose transport protein SUT1 (538 aa).

The Cytoplasmic portion of the chain corresponds to Met1 to Arg52. The chain crosses the membrane as a helical span at residues Leu53–Leu73. Residues Leu74–Leu81 lie on the Extracellular side of the membrane. A helical membrane pass occupies residues Gly82–Val102. Over Gln103–Tyr123 the chain is Cytoplasmic. Residues Ile124 to Ile144 traverse the membrane as a helical segment. At Gly145–Arg162 the chain is on the extracellular side. A helical membrane pass occupies residues Trp163–Val183. The Cytoplasmic portion of the chain corresponds to Gln184–His198. The chain crosses the membrane as a helical span at residues Gly199 to Tyr219. The Extracellular segment spans residues Ser220–Lys247. A helical transmembrane segment spans residues Gly248–Ala268. The Cytoplasmic portion of the chain corresponds to Lys269 to Thr306. The helical transmembrane segment at Gly307 to Leu327 threads the bilayer. Residues Tyr328 to Arg357 lie on the Extracellular side of the membrane. The chain crosses the membrane as a helical span at residues Ala358–Glu378. At Pro379–Val388 the chain is on the cytoplasmic side. A helical membrane pass occupies residues Val389–Phe409. Residues Trp410–Cys433 are Extracellular-facing. The helical transmembrane segment at Leu434–Val454 threads the bilayer. The Cytoplasmic portion of the chain corresponds to Thr455–Thr470. Residues Gly471 to Trp491 form a helical membrane-spanning segment. At Asp492–Asn499 the chain is on the extracellular side. Residues Ile500–Leu520 traverse the membrane as a helical segment. Residues Leu521–His538 are Cytoplasmic-facing.

The protein belongs to the glycoside-pentoside-hexuronide (GPH) cation symporter transporter (TC 2.A.2.4) family. As to quaternary structure, homodimer.

It localises to the cell membrane. Its pathway is glycan biosynthesis; sucrose metabolism. In terms of biological role, responsible for the transport of sucrose into the cell, with the concomitant uptake of protons (symport system). May also transport other glucosides. May be required for apoplastic phloem sucrose loading in source tissues (e.g. leaves) in order to transport it to sink tissues (e.g. roots, flowers). This Oryza sativa subsp. indica (Rice) protein is Sucrose transport protein SUT1 (SUT1).